The chain runs to 250 residues: Probable aquaporin TIP-type (250 aa).

2 consecutive transmembrane segments (helical) span residues 20 to 42 (AYVA…AIAY) and 55 to 77 (GLVA…AANV). An NPA 1 motif is present at residues 83–85 (NPA). Helical transmembrane passes span 97–119 (TILT…CLLL), 140–162 (IQGV…ATAA), and 172–194 (IAPI…FSGG). The NPA 2 motif lies at 197 to 199 (NPA). The helical transmembrane segment at 215 to 237 (WIYWAGPLIGGALAGFIYGDVFI) threads the bilayer.

Belongs to the MIP/aquaporin (TC 1.A.8) family. TIP (TC 1.A.8.10) subfamily. In terms of tissue distribution, expressed in mature seeds and dark-grown seedlings.

The protein resides in the vacuole membrane. In terms of biological role, channel protein in tonoplast. These proteins may allow the diffusion of amino acids and/or peptides from the vacuolar compartment to the cytoplasm. The polypeptide is Probable aquaporin TIP-type (DIP) (Antirrhinum majus (Garden snapdragon)).